Here is a 99-residue protein sequence, read N- to C-terminus: Small ribosomal subunit protein bS21 (99 aa).

A disordered region spans residues 60-99 (KKLQREGLLPMKPKPVFGAGPGGDRRGPGAGPGAGPRPAR).

It belongs to the bacterial ribosomal protein bS21 family.

The polypeptide is Small ribosomal subunit protein bS21 (Rhodopseudomonas palustris (strain BisA53)).